An 81-amino-acid chain; its full sequence is ATP synthase subunit c (81 aa).

A run of 2 helical transmembrane segments spans residues A7–G27 and L57–A77.

Belongs to the ATPase C chain family. In terms of assembly, F-type ATPases have 2 components, F(1) - the catalytic core - and F(0) - the membrane proton channel. F(1) has five subunits: alpha(3), beta(3), gamma(1), delta(1), epsilon(1). F(0) has four main subunits: a(1), b(1), b'(1) and c(10-14). The alpha and beta chains form an alternating ring which encloses part of the gamma chain. F(1) is attached to F(0) by a central stalk formed by the gamma and epsilon chains, while a peripheral stalk is formed by the delta, b and b' chains.

It is found in the cellular thylakoid membrane. F(1)F(0) ATP synthase produces ATP from ADP in the presence of a proton or sodium gradient. F-type ATPases consist of two structural domains, F(1) containing the extramembraneous catalytic core and F(0) containing the membrane proton channel, linked together by a central stalk and a peripheral stalk. During catalysis, ATP synthesis in the catalytic domain of F(1) is coupled via a rotary mechanism of the central stalk subunits to proton translocation. Functionally, key component of the F(0) channel; it plays a direct role in translocation across the membrane. A homomeric c-ring of between 10-14 subunits forms the central stalk rotor element with the F(1) delta and epsilon subunits. The protein is ATP synthase subunit c of Synechococcus sp. (strain CC9902).